The chain runs to 322 residues: Delta-aminolevulinic acid dehydratase (322 aa).

Positions 120, 122, and 130 each coordinate Zn(2+). The active-site Schiff-base intermediate with substrate is lysine 195. Positions 205 and 217 each coordinate 5-aminolevulinate. Glutamate 233 serves as a coordination point for Mg(2+). Catalysis depends on lysine 248, which acts as the Schiff-base intermediate with substrate. 5-aminolevulinate is bound by residues serine 274 and tyrosine 312.

This sequence belongs to the ALAD family. Homooctamer. Zn(2+) serves as cofactor.

The enzyme catalyses 2 5-aminolevulinate = porphobilinogen + 2 H2O + H(+). The protein operates within porphyrin-containing compound metabolism; protoporphyrin-IX biosynthesis; coproporphyrinogen-III from 5-aminolevulinate: step 1/4. In terms of biological role, catalyzes an early step in the biosynthesis of tetrapyrroles. Binds two molecules of 5-aminolevulinate per subunit, each at a distinct site, and catalyzes their condensation to form porphobilinogen. The polypeptide is Delta-aminolevulinic acid dehydratase (hemB) (Archaeoglobus fulgidus (strain ATCC 49558 / DSM 4304 / JCM 9628 / NBRC 100126 / VC-16)).